Reading from the N-terminus, the 135-residue chain is Protein KRTCAP2 homolog (135 aa).

Helical transmembrane passes span 1–21 (MAVS…LLFA), 35–55 (PMAI…LTAI), 69–89 (TKLI…SGMV), and 93–113 (CITT…RISI).

This sequence belongs to the KRTCAP2 family. As to quaternary structure, component of the oligosaccharyltransferase (OST) complex.

Its subcellular location is the membrane. Subunit of the oligosaccharyl transferase (OST) complex that catalyzes the initial transfer of a defined glycan (Glc(3)Man(9)GlcNAc(2) in eukaryotes) from the lipid carrier dolichol-pyrophosphate to an asparagine residue within an Asn-X-Ser/Thr consensus motif in nascent polypeptide chains, the first step in protein N-glycosylation. N-glycosylation occurs cotranslationally and the complex associates with the Sec61 complex at the channel-forming translocon complex that mediates protein translocation across the endoplasmic reticulum (ER). All subunits are required for a maximal enzyme activity. The polypeptide is Protein KRTCAP2 homolog (Ixodes scapularis (Black-legged tick)).